Here is an 878-residue protein sequence, read N- to C-terminus: Calcium-transporting ATPase 1 (878 aa).

4 helical membrane passes run 50 to 72 (LFID…VQLF), 76 to 95 (FVES…VAVV), 243 to 263 (LGWV…LRLF), and 281 to 301 (FAVA…VTIV). Ca(2+) is bound by residues valine 287, alanine 288, isoleucine 290, and glutamate 292. Aspartate 334 acts as the 4-aspartylphosphate intermediate in catalysis. A run of 6 helical transmembrane segments spans residues 681–701 (LFSG…VGWV), 704–724 (FTAL…AIAL), 753–773 (VILI…YVGQ), 779–799 (MGVA…TFAA), 816–836 (YVLM…LPFL), and 845–865 (AFGW…VICM). Ca(2+)-binding residues include asparagine 713 and aspartate 717.

This sequence belongs to the cation transport ATPase (P-type) (TC 3.A.3) family. Type IIA subfamily.

The protein resides in the cell membrane. The enzyme catalyses Ca(2+)(in) + ATP + H2O = Ca(2+)(out) + ADP + phosphate + H(+). With respect to regulation, inhibited by very high concentrations of cyclopiazonic acid (CPA). Functionally, catalyzes the hydrolysis of ATP coupled with the transport of calcium. In Lactococcus lactis subsp. lactis (strain IL1403) (Streptococcus lactis), this protein is Calcium-transporting ATPase 1 (yoaB).